A 555-amino-acid polypeptide reads, in one-letter code: Heterochromatin protein 1-binding protein 3 (555 aa).

Ala-2 carries the N-acetylalanine modification. Residue Ser-6 is modified to Phosphoserine. The segment at 29-134 (KLGEKVEDNT…KEKKVKKTIP (106 aa)) is disordered. At Thr-51 the chain carries Phosphothreonine. Positions 51–67 (TPPKSKLAEGVEEKPEP) are enriched in basic and acidic residues. Lys-64 is covalently cross-linked (Glycyl lysine isopeptide (Lys-Gly) (interchain with G-Cter in SUMO2)). The residue at position 85 (Thr-85) is a Phosphothreonine. Lys-97 is covalently cross-linked (Glycyl lysine isopeptide (Lys-Gly) (interchain with G-Cter in SUMO2)). Residues 100–127 (PENEEKEENKPSEETKKDEKDQSKEKEK) show a composition bias toward basic and acidic residues. 3 positions are modified to phosphoserine: Ser-142, Ser-155, and Ser-156. The H15 1 domain maps to 157–232 (PRPKMDAILT…GASGSFVVVQ (76 aa)). Position 190 is an N6-acetyllysine (Lys-190). The interval 227–254 (SFVVVQKSRKPPQKSRNRKNRSSAVDPE) is disordered. Over residues 233 to 247 (KSRKPPQKSRNRKNR) the composition is skewed to basic residues. Residues Ser-248 and Ser-249 each carry the phosphoserine modification. H15 domains are found at residues 255-330 (PQVK…QLKK) and 337-413 (LGGS…QLCF). Residue Lys-258 forms a Glycyl lysine isopeptide (Lys-Gly) (interchain with G-Cter in SUMO2) linkage. Residues 422–555 (LFPKKEPDDS…TMKKSFKAKK (134 aa)) form a disordered region. The segment covering 430–452 (DSKDEDEDEDEDDSSEEDSEDEE) has biased composition (acidic residues). Residues Ser-443, Ser-444, and Ser-448 each carry the phosphoserine modification. A compositionally biased stretch (basic residues) spans 491-512 (GKTRPLPKKAPPKAKSPAKKAR). Positions 513–532 (PSPSVIKKPSGSSSKKPAAS) are enriched in low complexity. The segment covering 545 to 555 (STMKKSFKAKK) has biased composition (basic residues).

In terms of assembly, interacts (via PxVxL motif) with CBX5.

It is found in the nucleus. The protein resides in the chromosome. Functionally, component of heterochromatin that maintains heterochromatin integrity during G1/S progression and regulates the duration of G1 phase to critically influence cell proliferative capacity. May play a role in hypoxia-induced oncogenesis. The chain is Heterochromatin protein 1-binding protein 3 (HP1BP3) from Bos taurus (Bovine).